Here is a 119-residue protein sequence, read N- to C-terminus: Methylglyoxal synthase (119 aa).

The 119-residue stretch at 1-119 (MRIALIAHDK…GTADLIIKQF (119 aa)) folds into the MGS-like domain. Residues His-8, Lys-12, 34–37 (TGTT), and 54–55 (SG) contribute to the substrate site. Catalysis depends on Asp-60, which acts as the Proton donor/acceptor. His-87 is a substrate binding site.

It belongs to the methylglyoxal synthase family.

The catalysed reaction is dihydroxyacetone phosphate = methylglyoxal + phosphate. Catalyzes the formation of methylglyoxal from dihydroxyacetone phosphate. The sequence is that of Methylglyoxal synthase from Clostridium botulinum (strain Eklund 17B / Type B).